A 424-amino-acid chain; its full sequence is MAYHIPRGTQDILPGESDRWQFVEQIMRETCRTYQYKEIRTPIFEHTELFARGVGESTDIVQKEMYTFEDRKGRSLTLRPEGTAAAVRAFNENKLFANPVQPTKLYYVGPMFRYERPQTGRFRQFYQFGIEAIGSKDPAVDAEVIALAMSIYRKAGLKHVKLVLNSLGDQDSRKSYREALVKHFEPRIGEFCSDCQSRLHTNPLRILDCKKDREHELMKTAPSILDYLNEESAAYFEKVKQYLNDLGIPFEIDPNLVRGLDYYNHTAFEIMSNAEGFGAITTLAGGGRYDGLVEQIGGPEAPGIGFAMSIERLLAAIDAEKTELPVNQGIDCYIVTLGEKAKDYSVSLVYKLREAGISSEIDYENKKMKGQFKTADRLGARFIAILGEDELAQNKINVKDAETGEQREVVLDELIQVLKADQKQ.

It belongs to the class-II aminoacyl-tRNA synthetase family. Homodimer.

Its subcellular location is the cytoplasm. It carries out the reaction tRNA(His) + L-histidine + ATP = L-histidyl-tRNA(His) + AMP + diphosphate + H(+). The chain is Histidine--tRNA ligase from Bacillus velezensis (strain DSM 23117 / BGSC 10A6 / LMG 26770 / FZB42) (Bacillus amyloliquefaciens subsp. plantarum).